We begin with the raw amino-acid sequence, 157 residues long: UPF0251 protein CLK_0815 (157 aa).

It belongs to the UPF0251 family.

This is UPF0251 protein CLK_0815 from Clostridium botulinum (strain Loch Maree / Type A3).